Reading from the N-terminus, the 437-residue chain is MANMRNIILTALLSAIALVSGYVEGLDDKFTEFRQNELWLVEFYAPWCAYCHTFEPVWTEVGAELKSLGSPVNVGKIDTTAHTSIATEFNIRGYPTIKLFKGDLSFDYKGPRTKDGIIEFTNRVSGPVVRPLSSVQLFQHVMSRHDVIFVYIGGESLLKKEYYKAATEFIVHTYFFTASEEILPKAVTLQDVPAVAVFKDGTYYIYNEFIDGDLSSWINRERFLSYFQIDSYSLYQMGELSKLVALAVVDEKNPSEESIRYKTLMERVSTEYRDHYKSDFQFGYVDGNEYVNGLIMGELAMPSIIVLNMSIDGYYIPESSTETIEDLLQFLNSVLDGSTTLLGGNGFWQCAKRIFYKGKNTVMSMVETAPVFSCFVLGLPVGVVVLVIYATCTAVPADDEKPEEEATASPALDTHGKKAIESQPESTEKTSEAKKED.

The N-terminal stretch at 1 to 21 (MANMRNIILTALLSAIALVSG) is a signal peptide. Residues 22–126 (YVEGLDDKFT…IIEFTNRVSG (105 aa)) form the Thioredoxin domain. Topologically, residues 22–368 (YVEGLDDKFT…KNTVMSMVET (347 aa)) are extracellular. Residues Cys48 and Cys51 each act as nucleophile in the active site. Residues Cys48 and Cys51 are joined by a disulfide bond. The N-linked (GlcNAc...) asparagine glycan is linked to Asn308. Residues 369-389 (APVFSCFVLGLPVGVVVLVIY) form a helical membrane-spanning segment. At 390-437 (ATCTAVPADDEKPEEEATASPALDTHGKKAIESQPESTEKTSEAKKED) the chain is on the cytoplasmic side. Positions 398–437 (DDEKPEEEATASPALDTHGKKAIESQPESTEKTSEAKKED) are disordered. The span at 414-437 (THGKKAIESQPESTEKTSEAKKED) shows a compositional bias: basic and acidic residues. The Di-lysine motif motif lies at 434–437 (KKED).

Its subcellular location is the endoplasmic reticulum membrane. It carries out the reaction Catalyzes the rearrangement of -S-S- bonds in proteins.. Functionally, probable disulfide isomerase, which participates in the folding of proteins containing disulfide bonds. May act as a dithiol oxidase. Acts as a regulator of endoplasmic reticulum-mitochondria contact sites via its ability to regulate redox signals. This chain is Protein disulfide-isomerase tmx3a (tmx3a), found in Danio rerio (Zebrafish).